A 461-amino-acid polypeptide reads, in one-letter code: High-affinity Na(+)/H(+) antiporter NhaS3 (461 aa).

11 helical membrane passes run 22–42 (TEIA…IYFA), 58–78 (VLGE…LLLF), 113–133 (SEVI…EIGL), 148–170 (AIVA…MTIF), 175–197 (IPAI…KVLA), 209–229 (IIIG…AVVG), 239–259 (ISNI…SILI), 280–300 (LLLV…IVQL), 360–380 (GLII…VTGF), 391–411 (LAIG…AGVG), and 424–444 (AIIV…RAVF).

The protein belongs to the monovalent cation:proton antiporter 2 (CPA2) transporter (TC 2.A.37) family.

Its subcellular location is the cellular thylakoid membrane. Its function is as follows. Na(+)/H(+) antiporter that transports sodium from the cytoplasm into the thylakoid lumen in exchange for protons. Contributes to sodium homeostasis and tolerance. Also has Li(+)/H(+) antiport activity under K(+)-free conditions, but not under K(+)-rich conditions. The sequence is that of High-affinity Na(+)/H(+) antiporter NhaS3 (nhaS3) from Synechocystis sp. (strain ATCC 27184 / PCC 6803 / Kazusa).